Consider the following 413-residue polypeptide: Cardiolipin synthase B (413 aa).

PLD phosphodiesterase domains lie at 108–135 (VFRR…SAEH) and 285–312 (RRRP…DPLS). Catalysis depends on residues histidine 113, lysine 115, aspartate 120, histidine 290, lysine 292, and aspartate 297. Residues 390–413 (VDPPAQPTMETQDRVETENTGVKP) form a disordered region.

The protein belongs to the phospholipase D family. Cardiolipin synthase subfamily. ClsB sub-subfamily.

Its subcellular location is the cell membrane. It catalyses the reaction 2 a 1,2-diacyl-sn-glycero-3-phospho-(1'-sn-glycerol) = a cardiolipin + glycerol. In terms of biological role, catalyzes the phosphatidyl group transfer from one phosphatidylglycerol molecule to another to form cardiolipin (CL) (diphosphatidylglycerol) and glycerol. This Escherichia coli O157:H7 protein is Cardiolipin synthase B.